We begin with the raw amino-acid sequence, 591 residues long: Myelin expression factor 2 (591 aa).

The tract at residues Met1 to Arg92 is disordered. Residues Glu22–Pro36 are compositionally biased toward basic and acidic residues. Lys44 is covalently cross-linked (Glycyl lysine isopeptide (Lys-Gly) (interchain with G-Cter in SUMO2)). Basic and acidic residues-rich tracts occupy residues Met45–Thr63 and Tyr74–Gly87. RRM domains are found at residues Asn91–Asp169 and Ser224–Lys301. 2 positions are modified to omega-N-methylarginine: Arg397 and Arg417. Ser422 is subject to Phosphoserine. Residues Asn514–Asn590 enclose the RRM 3 domain.

As to quaternary structure, monomer. As to expression, highly expressed in the brain.

Its subcellular location is the nucleus. Its function is as follows. Transcriptional repressor of the myelin basic protein gene (MBP). Binds to the proximal MB1 element 5'-TTGTCC-3' of the MBP promoter. Its binding to MB1 and function are inhibited by PURA. In Mus musculus (Mouse), this protein is Myelin expression factor 2 (Myef2).